Here is a 514-residue protein sequence, read N- to C-terminus: Na(+)/H(+) antiporter NhaB (514 aa).

Transmembrane regions (helical) follow at residues 23 to 43 (LALLVFLIINPFIFLANPFIA), 63 to 83 (PLLPGGLLAIEAVIIGMTSAA), 97 to 117 (LLLMFMVAGIYFMKQLLLFIF), 120 to 140 (LLLSIRSKMVLSLAFCVAAAF), 144 to 164 (FLDALTVVAVVISVAVGFYGI), 202 to 222 (LMMHAGVGTALGGVMTMVGEP), 238 to 258 (FFLRMSPVTVPVLVCGLLTCM), 303 to 323 (AVIGVWLVTALALHLAEVGLI), 357 to 377 (LTVFFSIVAVIIDQHLFAPII), 391 to 411 (LFYLFNGLLSSISDNVFVGTI), 447 to 467 (ATPNGQAAFLFLLTSALAPLI), and 475 to 495 (VWMALPYTIVLTLIGLLCVEF).

This sequence belongs to the NhaB Na(+)/H(+) (TC 2.A.34) antiporter family.

Its subcellular location is the cell inner membrane. The catalysed reaction is 2 Na(+)(in) + 3 H(+)(out) = 2 Na(+)(out) + 3 H(+)(in). Functionally, na(+)/H(+) antiporter that extrudes sodium in exchange for external protons. In Salmonella newport (strain SL254), this protein is Na(+)/H(+) antiporter NhaB.